Reading from the N-terminus, the 475-residue chain is Sulfate adenylyltransferase subunit 1 (475 aa).

One can recognise a tr-type G domain in the interval 25 to 239 (KSLLRFLTCG…EVLETVEIQR (215 aa)). A G1 region spans residues 34–41 (GSVDDGKS). 34–41 (GSVDDGKS) is a binding site for GTP. The interval 92–96 (GITID) is G2. Residues 113–116 (DTPG) form a G3 region. GTP is bound by residues 113–117 (DTPGH) and 168–171 (NKMD). The tract at residues 168-171 (NKMD) is G4. Residues 206-208 (SAL) are G5.

It belongs to the TRAFAC class translation factor GTPase superfamily. Classic translation factor GTPase family. CysN/NodQ subfamily. As to quaternary structure, heterodimer composed of CysD, the smaller subunit, and CysN.

It carries out the reaction sulfate + ATP + H(+) = adenosine 5'-phosphosulfate + diphosphate. It participates in sulfur metabolism; hydrogen sulfide biosynthesis; sulfite from sulfate: step 1/3. Its function is as follows. With CysD forms the ATP sulfurylase (ATPS) that catalyzes the adenylation of sulfate producing adenosine 5'-phosphosulfate (APS) and diphosphate, the first enzymatic step in sulfur assimilation pathway. APS synthesis involves the formation of a high-energy phosphoric-sulfuric acid anhydride bond driven by GTP hydrolysis by CysN coupled to ATP hydrolysis by CysD. This is Sulfate adenylyltransferase subunit 1 from Escherichia coli O17:K52:H18 (strain UMN026 / ExPEC).